The following is a 245-amino-acid chain: Leucyl/phenylalanyl-tRNA--protein transferase (245 aa).

Belongs to the L/F-transferase family.

The protein resides in the cytoplasm. The catalysed reaction is N-terminal L-lysyl-[protein] + L-leucyl-tRNA(Leu) = N-terminal L-leucyl-L-lysyl-[protein] + tRNA(Leu) + H(+). It carries out the reaction N-terminal L-arginyl-[protein] + L-leucyl-tRNA(Leu) = N-terminal L-leucyl-L-arginyl-[protein] + tRNA(Leu) + H(+). The enzyme catalyses L-phenylalanyl-tRNA(Phe) + an N-terminal L-alpha-aminoacyl-[protein] = an N-terminal L-phenylalanyl-L-alpha-aminoacyl-[protein] + tRNA(Phe). Functions in the N-end rule pathway of protein degradation where it conjugates Leu, Phe and, less efficiently, Met from aminoacyl-tRNAs to the N-termini of proteins containing an N-terminal arginine or lysine. In Paraburkholderia phymatum (strain DSM 17167 / CIP 108236 / LMG 21445 / STM815) (Burkholderia phymatum), this protein is Leucyl/phenylalanyl-tRNA--protein transferase.